Reading from the N-terminus, the 80-residue chain is Exodeoxyribonuclease 7 small subunit (80 aa).

It belongs to the XseB family. As to quaternary structure, heterooligomer composed of large and small subunits.

It localises to the cytoplasm. The enzyme catalyses Exonucleolytic cleavage in either 5'- to 3'- or 3'- to 5'-direction to yield nucleoside 5'-phosphates.. Its function is as follows. Bidirectionally degrades single-stranded DNA into large acid-insoluble oligonucleotides, which are then degraded further into small acid-soluble oligonucleotides. The chain is Exodeoxyribonuclease 7 small subunit from Caulobacter sp. (strain K31).